The sequence spans 544 residues: MSTKFIFVTGGVVSSLGKGIAAASLAAILEARGLNVTILKLDPYINVDPGTMSPIQHGEVYVTEDGAETDLDLGHYERFIRTKMTSRNNFTQGRVYKDVLHRERRGEYLGATIQVIPHITNDIKQRVYSGAEGYDIALVEIGGTVGDIESQPFLEAIRQMGTEIGRERALFIHLTLVPFLGPAGEVKTKPTQHSVKELRSIGIQPDILICRSDRKLPSNERAKIALFTNVEEKAVISLPDVDSIYKIPALLKSQDLDYFVCRRFHLDVPEADLVEWEQVLYQESNPTGEVTIGMVGKYIELPDAYKSVNEALKHAGLKNRLTVNIQYIDSQDLETKGVDSLAHLDAILVPGGFGGRGVEGKILAAKYARENKVPYLGICLGMQVALIEYARNVAGLVDANSTEFNAQSASPVVGLITEWLDAEGKVEQRDEKSDLGGTMRLGAQKCHLTPGSKVHAVYGSDEIVERHRHRYEVNNNFVEQLEKAGLSFTGLSEDKKLVEIIENKDHPWFIAAQFHPEFTSTPRDGHPLFEGFVAAAHIHQKASS.

Positions 1–266 are amidoligase domain; that stretch reads MSTKFIFVTG…DYFVCRRFHL (266 aa). Ser14 is a binding site for CTP. Ser14 provides a ligand contact to UTP. ATP contacts are provided by residues 15–20 and Asp72; that span reads SLGKGI. 2 residues coordinate Mg(2+): Asp72 and Glu140. CTP contacts are provided by residues 147-149, 187-192, and Lys223; these read DIE and KTKPTQ. UTP-binding positions include 187–192 and Lys223; that span reads KTKPTQ. Residues 291 to 542 enclose the Glutamine amidotransferase type-1 domain; that stretch reads TIGMVGKYIE…VAAAHIHQKA (252 aa). An L-glutamine-binding site is contributed by Gly352. The active-site Nucleophile; for glutamine hydrolysis is the Cys379. L-glutamine contacts are provided by residues 380–383, Glu403, and Arg470; that span reads LGMQ. Active-site residues include His515 and Glu517.

It belongs to the CTP synthase family. In terms of assembly, homotetramer.

It catalyses the reaction UTP + L-glutamine + ATP + H2O = CTP + L-glutamate + ADP + phosphate + 2 H(+). It carries out the reaction L-glutamine + H2O = L-glutamate + NH4(+). The enzyme catalyses UTP + NH4(+) + ATP = CTP + ADP + phosphate + 2 H(+). It functions in the pathway pyrimidine metabolism; CTP biosynthesis via de novo pathway; CTP from UDP: step 2/2. Its activity is regulated as follows. Allosterically activated by GTP, when glutamine is the substrate; GTP has no effect on the reaction when ammonia is the substrate. The allosteric effector GTP functions by stabilizing the protein conformation that binds the tetrahedral intermediate(s) formed during glutamine hydrolysis. Inhibited by the product CTP, via allosteric rather than competitive inhibition. Functionally, catalyzes the ATP-dependent amination of UTP to CTP with either L-glutamine or ammonia as the source of nitrogen. Regulates intracellular CTP levels through interactions with the four ribonucleotide triphosphates. This is CTP synthase from Pseudoalteromonas translucida (strain TAC 125).